The primary structure comprises 170 residues: CASP-like protein 1F1 (170 aa).

At 1–16 the chain is on the cytoplasmic side; sequence MMGDNEGRRTPLLNLG. Residues 17–37 form a helical membrane-spanning segment; it reads VQVSMRVLIIGAAMASMWVMI. Residues 38–62 are Extracellular-facing; that stretch reads TNREVASVYGIAFEAKYSYSSAFRY. The helical transmembrane segment at 63–83 threads the bilayer; that stretch reads LVYAQIAVCAATLFTLVWACL. Topologically, residues 84–88 are cytoplasmic; it reads AVRRR. A helical membrane pass occupies residues 89-109; the sequence is GLVFALFFFDLLTTLTAISAF. Residues 110–141 lie on the Extracellular side of the membrane; the sequence is SAAFAEGYVGKYGNKQAGWLPICGYVHVYCSR. The chain crosses the membrane as a helical span at residues 142 to 162; it reads VTISLAMSFASFVLLFILTVL. The Cytoplasmic portion of the chain corresponds to 163-170; it reads TASSARHY.

Belongs to the Casparian strip membrane proteins (CASP) family. Homodimer and heterodimers.

The protein resides in the cell membrane. This Arabidopsis lyrata subsp. lyrata (Lyre-leaved rock-cress) protein is CASP-like protein 1F1.